The following is a 276-amino-acid chain: tRNA (guanine-N(7)-)-methyltransferase (276 aa).

Positions 1–23 (MRPDPAPLDPTDASPAQARRHQP) are disordered. S-adenosyl-L-methionine contacts are provided by E103, E128, D155, and D178. D178 is an active-site residue. Substrate contacts are provided by residues K182, D214, and 252–255 (TRYE).

The protein belongs to the class I-like SAM-binding methyltransferase superfamily. TrmB family.

The enzyme catalyses guanosine(46) in tRNA + S-adenosyl-L-methionine = N(7)-methylguanosine(46) in tRNA + S-adenosyl-L-homocysteine. The protein operates within tRNA modification; N(7)-methylguanine-tRNA biosynthesis. Catalyzes the formation of N(7)-methylguanine at position 46 (m7G46) in tRNA. This is tRNA (guanine-N(7)-)-methyltransferase from Cutibacterium acnes (strain DSM 16379 / KPA171202) (Propionibacterium acnes).